Consider the following 465-residue polypeptide: Ribulose bisphosphate carboxylase large chain (465 aa).

At Lys4 the chain carries N6,N6,N6-trimethyllysine. Residues Xaa113 and Thr163 each contribute to the substrate site. Lys165 acts as the Proton acceptor in catalysis. Lys167 contacts substrate. Lys191, Asp193, and Glu194 together coordinate Mg(2+). An N6-carboxylysine modification is found at Lys191. The active-site Proton acceptor is the His284. Substrate contacts are provided by Arg285, His317, and Ser369.

It belongs to the RuBisCO large chain family. Type I subfamily. Heterohexadecamer of 8 large chains and 8 small chains; disulfide-linked. The disulfide link is formed within the large subunit homodimers. Mg(2+) is required as a cofactor. The disulfide bond which can form in the large chain dimeric partners within the hexadecamer appears to be associated with oxidative stress and protein turnover.

The protein resides in the plastid. Its subcellular location is the chloroplast. It catalyses the reaction 2 (2R)-3-phosphoglycerate + 2 H(+) = D-ribulose 1,5-bisphosphate + CO2 + H2O. The catalysed reaction is D-ribulose 1,5-bisphosphate + O2 = 2-phosphoglycolate + (2R)-3-phosphoglycerate + 2 H(+). In terms of biological role, ruBisCO catalyzes two reactions: the carboxylation of D-ribulose 1,5-bisphosphate, the primary event in carbon dioxide fixation, as well as the oxidative fragmentation of the pentose substrate in the photorespiration process. Both reactions occur simultaneously and in competition at the same active site. This chain is Ribulose bisphosphate carboxylase large chain, found in Cornus obliqua (Silky dogwood).